Consider the following 193-residue polypeptide: Recombination protein RecR (193 aa).

Residues 61-76 (CSSCNALSESEVCEIC) form a C4-type zinc finger. Residues 84–170 (SQLCMVLHPR…TFTKIAQGVP (87 aa)) form the Toprim domain.

The protein belongs to the RecR family.

Functionally, may play a role in DNA repair. It seems to be involved in an RecBC-independent recombinational process of DNA repair. It may act with RecF and RecO. The sequence is that of Recombination protein RecR from Helicobacter pylori (strain P12).